An 84-amino-acid chain; its full sequence is Large ribosomal subunit protein bL27 (84 aa).

The segment at 1 to 22 (MAHKKAGGSTRNGRDSESKRLG) is disordered.

The protein belongs to the bacterial ribosomal protein bL27 family.

The protein is Large ribosomal subunit protein bL27 of Shewanella frigidimarina (strain NCIMB 400).